Here is a 239-residue protein sequence, read N- to C-terminus: Mannose-P-dolichol utilization defect 1 protein homolog 1 (239 aa).

6 helical membrane-spanning segments follow: residues 25–45 (CLLP…SMTV), 62–82 (LSVV…AYCL), 91–111 (FGEL…IYYF), 123–143 (AILY…PFLF), 174–194 (LSFL…FTSI), and 202–222 (MLLG…QILL). A PQ-loop 1 domain is found at 27 to 93 (LPLISKLLGY…KDLPFSAFGE (67 aa)). The region spanning 150–205 (KHLIFLSARIPQIWKNFRNKSTGQLSFLTCLMNFGGALARVFTSIQEKAPLSMLLG) is the PQ-loop 2 domain.

It belongs to the MPDU1 (TC 2.A.43.3) family.

Its subcellular location is the membrane. This chain is Mannose-P-dolichol utilization defect 1 protein homolog 1, found in Arabidopsis thaliana (Mouse-ear cress).